The following is a 440-amino-acid chain: Stromal membrane-associated protein 1 (440 aa).

The Arf-GAP domain maps to 18–143 (QLILSKLLRE…IAITNKEKEK (126 aa)). The segment at 33–56 (CADCEAKGPRWASWNIGVFICIRC) adopts a C4-type zinc-finger fold. Composition is skewed to basic and acidic residues over residues 140–158 (EKEKKKDEKKREKEPEKPA) and 165–178 (KLPKKEEQQLEPKK). 2 disordered regions span residues 140 to 211 (EKEK…PATA) and 410 to 440 (NASAGFGQPPSTTAGWSGSSSGQTLSTQLWK). Positions 192–196 (LLGLD) match the Interaction with clathrin heavy chains motif. Residues 420 to 440 (STTAGWSGSSSGQTLSTQLWK) show a composition bias toward low complexity.

As to quaternary structure, interacts with ARF6. Interacts with clathrin heavy chains via the clathrin box-like motif. In terms of tissue distribution, detected in adult brain, lung, heart, liver, ovary and bone marrow. Detected in stromal cells of the red pulp of adult spleen.

The protein resides in the cell membrane. Its function is as follows. GTPase activating protein that acts on ARF6. Plays a role in clathrin-dependent endocytosis. May play a role in erythropoiesis. The chain is Stromal membrane-associated protein 1 (Smap1) from Mus musculus (Mouse).